The sequence spans 534 residues: DM7 family protein GE17491 (534 aa).

Belongs to the DM7 family.

The protein is DM7 family protein GE17491 of Drosophila yakuba (Fruit fly).